A 371-amino-acid chain; its full sequence is tRNA-specific 2-thiouridylase MnmA (371 aa).

Residues 13–20 (GMSGGVDS) and M39 contribute to the ATP site. The segment at 99 to 101 (NPD) is interaction with target base in tRNA. Catalysis depends on C104, which acts as the Nucleophile. A disulfide bridge links C104 with C200. G128 is an ATP binding site. Positions 150–152 (KDQ) are interaction with tRNA. C200 (cysteine persulfide intermediate) is an active-site residue. Positions 308–309 (RY) are interaction with tRNA.

This sequence belongs to the MnmA/TRMU family.

It is found in the cytoplasm. It carries out the reaction S-sulfanyl-L-cysteinyl-[protein] + uridine(34) in tRNA + AH2 + ATP = 2-thiouridine(34) in tRNA + L-cysteinyl-[protein] + A + AMP + diphosphate + H(+). Functionally, catalyzes the 2-thiolation of uridine at the wobble position (U34) of tRNA, leading to the formation of s(2)U34. The protein is tRNA-specific 2-thiouridylase MnmA of Bacillus anthracis.